The primary structure comprises 498 residues: Glutathione hydrolase 6 (498 aa).

Residues 1 to 49 (MDATTGAVLYQKLQLWEPGMESEEEEEEEEIAEPLVLSLRRLQNTPGNK) lie on the Cytoplasmic side of the membrane. Residues 50–70 (VGGLPGAWTRLLAGLLLLAVS) traverse the membrane as a helical; Signal-anchor for type II membrane protein segment. At 71–498 (SSLALRQLQG…PSGCCPFQGY (428 aa)) the chain is on the extracellular side. Residues N162, N167, and N376 are each glycosylated (N-linked (GlcNAc...) asparagine).

This sequence belongs to the gamma-glutamyltransferase family. Heterodimer composed of the light and heavy chains. The active site is located in the light chain. Post-translationally, cleaved by autocatalysis into a large and a small subunit and the autocatalytic cleavage is essential to the functional activation of the enzyme.

The protein localises to the membrane. It catalyses the reaction an N-terminal (5-L-glutamyl)-[peptide] + an alpha-amino acid = 5-L-glutamyl amino acid + an N-terminal L-alpha-aminoacyl-[peptide]. The enzyme catalyses glutathione + H2O = L-cysteinylglycine + L-glutamate. The catalysed reaction is an S-substituted glutathione + H2O = an S-substituted L-cysteinylglycine + L-glutamate. It functions in the pathway sulfur metabolism; glutathione metabolism. Its function is as follows. Hydrolyzes and transfers gamma-glutamyl moieties from glutathione and other gamma-glutamyl compounds to acceptors. This is Glutathione hydrolase 6 from Rattus norvegicus (Rat).